Reading from the N-terminus, the 375-residue chain is Tyrosine--tRNA ligase (375 aa).

L-tyrosine contacts are provided by Y37, Y168, Q172, D175, and Q190. Residues 251–255 (KMSKS) carry the 'KMSKS' region motif. K254 lines the ATP pocket.

This sequence belongs to the class-I aminoacyl-tRNA synthetase family. TyrS type 4 subfamily. Homodimer.

Its subcellular location is the cytoplasm. It catalyses the reaction tRNA(Tyr) + L-tyrosine + ATP = L-tyrosyl-tRNA(Tyr) + AMP + diphosphate + H(+). Its function is as follows. Catalyzes the attachment of tyrosine to tRNA(Tyr) in a two-step reaction: tyrosine is first activated by ATP to form Tyr-AMP and then transferred to the acceptor end of tRNA(Tyr). The protein is Tyrosine--tRNA ligase of Thermococcus kodakarensis (strain ATCC BAA-918 / JCM 12380 / KOD1) (Pyrococcus kodakaraensis (strain KOD1)).